The following is a 138-amino-acid chain: ATP synthase epsilon chain (138 aa).

This sequence belongs to the ATPase epsilon chain family. F-type ATPases have 2 components, CF(1) - the catalytic core - and CF(0) - the membrane proton channel. CF(1) has five subunits: alpha(3), beta(3), gamma(1), delta(1), epsilon(1). CF(0) has three main subunits: a, b and c.

It is found in the cellular thylakoid membrane. Produces ATP from ADP in the presence of a proton gradient across the membrane. The protein is ATP synthase epsilon chain of Cyanothece sp. (strain PCC 7425 / ATCC 29141).